A 240-amino-acid chain; its full sequence is UDP-2,3-diacylglucosamine hydrolase (240 aa).

Mn(2+)-binding residues include Asp8, His10, Asp41, Asn79, and His114. 79-80 (NR) is a binding site for substrate. Positions 122, 160, 164, 167, and 195 each coordinate substrate. Mn(2+)-binding residues include His195 and His197.

Belongs to the LpxH family. Mn(2+) is required as a cofactor.

It localises to the cell inner membrane. It catalyses the reaction UDP-2-N,3-O-bis[(3R)-3-hydroxytetradecanoyl]-alpha-D-glucosamine + H2O = 2-N,3-O-bis[(3R)-3-hydroxytetradecanoyl]-alpha-D-glucosaminyl 1-phosphate + UMP + 2 H(+). Its pathway is glycolipid biosynthesis; lipid IV(A) biosynthesis; lipid IV(A) from (3R)-3-hydroxytetradecanoyl-[acyl-carrier-protein] and UDP-N-acetyl-alpha-D-glucosamine: step 4/6. Functionally, hydrolyzes the pyrophosphate bond of UDP-2,3-diacylglucosamine to yield 2,3-diacylglucosamine 1-phosphate (lipid X) and UMP by catalyzing the attack of water at the alpha-P atom. Involved in the biosynthesis of lipid A, a phosphorylated glycolipid that anchors the lipopolysaccharide to the outer membrane of the cell. This chain is UDP-2,3-diacylglucosamine hydrolase, found in Escherichia fergusonii (strain ATCC 35469 / DSM 13698 / CCUG 18766 / IAM 14443 / JCM 21226 / LMG 7866 / NBRC 102419 / NCTC 12128 / CDC 0568-73).